A 498-amino-acid polypeptide reads, in one-letter code: Probable malate:quinone oxidoreductase 2 (498 aa).

The protein belongs to the MQO family. It depends on FAD as a cofactor.

It catalyses the reaction (S)-malate + a quinone = a quinol + oxaloacetate. Its pathway is carbohydrate metabolism; tricarboxylic acid cycle; oxaloacetate from (S)-malate (quinone route): step 1/1. The sequence is that of Probable malate:quinone oxidoreductase 2 from Staphylococcus epidermidis (strain ATCC 12228 / FDA PCI 1200).